The sequence spans 102 residues: Envelope glycoprotein N (102 aa).

An N-terminal signal peptide occupies residues 1–32 (MGKVLRKPFAKAVPLLFLAATWLLTGVLPAGA). The Virion surface portion of the chain corresponds to 33 to 69 (SSPTNAAAASLTEAQDQFYSYTCNADTFSPSLTSFAS). The chain crosses the membrane as a helical span at residues 70–90 (IWALLTLVLVIIASAIYLMYV). At 91-102 (CFNKFVNTLLTD) the chain is on the intravirion side.

The protein belongs to the herpesviridae glycoprotein N family. As to quaternary structure, interacts (via N-terminus) with gM (via N-terminus). The gM-gN heterodimer forms the gCII complex. Post-translationally, O-glycosylated. Contains alpha 2,6-sialic acid residues.

Its subcellular location is the virion membrane. The protein localises to the host membrane. The protein resides in the host Golgi apparatus. It localises to the host trans-Golgi network. Its function is as follows. Envelope glycoprotein necessary for proper maturation of gM and modulation of its membrane fusion activity. Also plays a critical role in virion morphogenesis. The chain is Envelope glycoprotein N from Epstein-Barr virus (strain AG876) (HHV-4).